The following is a 423-amino-acid chain: tRNA(Ile)-lysidine synthase (423 aa).

Residue 27 to 32 participates in ATP binding; sequence SGGVDS.

Belongs to the tRNA(Ile)-lysidine synthase family.

The protein localises to the cytoplasm. The catalysed reaction is cytidine(34) in tRNA(Ile2) + L-lysine + ATP = lysidine(34) in tRNA(Ile2) + AMP + diphosphate + H(+). Ligates lysine onto the cytidine present at position 34 of the AUA codon-specific tRNA(Ile) that contains the anticodon CAU, in an ATP-dependent manner. Cytidine is converted to lysidine, thus changing the amino acid specificity of the tRNA from methionine to isoleucine. The polypeptide is tRNA(Ile)-lysidine synthase (Streptococcus mutans serotype c (strain ATCC 700610 / UA159)).